The primary structure comprises 203 residues: High frequency lysogenization protein HflD homolog (203 aa).

The protein belongs to the HflD family.

The protein localises to the cytoplasm. It localises to the cell inner membrane. The sequence is that of High frequency lysogenization protein HflD homolog from Vesicomyosocius okutanii subsp. Calyptogena okutanii (strain HA).